A 264-amino-acid chain; its full sequence is Small ribosomal subunit protein eS1 (264 aa).

K34 carries the N6-acetyllysine; alternate modification. Residue K34 forms a Glycyl lysine isopeptide (Lys-Gly) (interchain with G-Cter in SUMO2); alternate linkage. K56 carries the post-translational modification N6-acetyllysine. The residue at position 155 (Y155) is an ADP-ribosyltyrosine. The tract at residues 233–264 (GEGSSSGKATGDETGAKVERADGYEPPVQESV) is disordered. A phosphoserine mark is found at S236 and S237. Residues 242 to 255 (TGDETGAKVERADG) show a composition bias toward basic and acidic residues. K249 bears the N6-acetyllysine; alternate mark. A Glycyl lysine isopeptide (Lys-Gly) (interchain with G-Cter in SUMO2); alternate cross-link involves residue K249. A Phosphotyrosine modification is found at Y256. Residue S263 is modified to Phosphoserine.

It belongs to the eukaryotic ribosomal protein eS1 family. As to quaternary structure, component of the small ribosomal subunit. Mature ribosomes consist of a small (40S) and a large (60S) subunit. The 40S subunit contains about 33 different proteins and 1 molecule of RNA (18S). The 60S subunit contains about 49 different proteins and 3 molecules of RNA (28S, 5.8S and 5S). Part of the small subunit (SSU) processome, composed of more than 70 proteins and the RNA chaperone small nucleolar RNA (snoRNA) U3. ADP-ribosylated at Tyr-155 by PARP1 in presence of HPF1.

The protein localises to the cytoplasm. The protein resides in the nucleus. It localises to the nucleolus. Its function is as follows. Component of the small ribosomal subunit. The ribosome is a large ribonucleoprotein complex responsible for the synthesis of proteins in the cell. Part of the small subunit (SSU) processome, first precursor of the small eukaryotic ribosomal subunit. During the assembly of the SSU processome in the nucleolus, many ribosome biogenesis factors, an RNA chaperone and ribosomal proteins associate with the nascent pre-rRNA and work in concert to generate RNA folding, modifications, rearrangements and cleavage as well as targeted degradation of pre-ribosomal RNA by the RNA exosome. May play a role during erythropoiesis. In Callithrix jacchus (White-tufted-ear marmoset), this protein is Small ribosomal subunit protein eS1.